The sequence spans 650 residues: Chaperone protein DnaK (650 aa).

Threonine 200 carries the post-translational modification Phosphothreonine; by autocatalysis. The interval 614–635 (AGAAGAAGAAEGAAHAGGAQQA) is disordered.

This sequence belongs to the heat shock protein 70 family.

In terms of biological role, acts as a chaperone. In Burkholderia lata (strain ATCC 17760 / DSM 23089 / LMG 22485 / NCIMB 9086 / R18194 / 383), this protein is Chaperone protein DnaK.